A 57-amino-acid chain; its full sequence is UPF0391 membrane protein BRADO2787 (57 aa).

The next 2 membrane-spanning stretches (helical) occupy residues tryptophan 6–serine 26 and isoleucine 35–phenylalanine 55.

The protein belongs to the UPF0391 family.

It is found in the cell membrane. In Bradyrhizobium sp. (strain ORS 278), this protein is UPF0391 membrane protein BRADO2787.